Reading from the N-terminus, the 397-residue chain is Tryptophan synthase beta chain (397 aa).

Lys-89 carries the N6-(pyridoxal phosphate)lysine modification.

Belongs to the TrpB family. In terms of assembly, tetramer of two alpha and two beta chains. Pyridoxal 5'-phosphate serves as cofactor.

The catalysed reaction is (1S,2R)-1-C-(indol-3-yl)glycerol 3-phosphate + L-serine = D-glyceraldehyde 3-phosphate + L-tryptophan + H2O. It participates in amino-acid biosynthesis; L-tryptophan biosynthesis; L-tryptophan from chorismate: step 5/5. In terms of biological role, the beta subunit is responsible for the synthesis of L-tryptophan from indole and L-serine. The sequence is that of Tryptophan synthase beta chain from Leptospira interrogans serogroup Icterohaemorrhagiae serovar copenhageni (strain Fiocruz L1-130).